Consider the following 345-residue polypeptide: Phosphoribosylformylglycinamidine cyclo-ligase (345 aa).

The protein belongs to the AIR synthase family.

The protein localises to the cytoplasm. It catalyses the reaction 2-formamido-N(1)-(5-O-phospho-beta-D-ribosyl)acetamidine + ATP = 5-amino-1-(5-phospho-beta-D-ribosyl)imidazole + ADP + phosphate + H(+). It participates in purine metabolism; IMP biosynthesis via de novo pathway; 5-amino-1-(5-phospho-D-ribosyl)imidazole from N(2)-formyl-N(1)-(5-phospho-D-ribosyl)glycinamide: step 2/2. In Synechococcus sp. (strain CC9605), this protein is Phosphoribosylformylglycinamidine cyclo-ligase.